The chain runs to 427 residues: Glucose-6-phosphate isomerase (427 aa).

Glutamate 277 functions as the Proton donor in the catalytic mechanism. Active-site residues include histidine 298 and lysine 414.

Belongs to the GPI family.

It localises to the cytoplasm. The enzyme catalyses alpha-D-glucose 6-phosphate = beta-D-fructose 6-phosphate. The protein operates within carbohydrate biosynthesis; gluconeogenesis. It participates in carbohydrate degradation; glycolysis; D-glyceraldehyde 3-phosphate and glycerone phosphate from D-glucose: step 2/4. Functionally, catalyzes the reversible isomerization of glucose-6-phosphate to fructose-6-phosphate. This chain is Glucose-6-phosphate isomerase, found in Mycoplasma mycoides subsp. mycoides SC (strain CCUG 32753 / NCTC 10114 / PG1).